A 172-amino-acid polypeptide reads, in one-letter code: Transcription factor E (172 aa).

Residues 8-90 form the HTH TFE/IIEalpha-type domain; sequence DDPVVQKYLH…LWTFQYENVP (83 aa).

This sequence belongs to the TFE family. In terms of assembly, monomer. Interaction with RNA polymerase subunits RpoF and RpoE is necessary for Tfe stimulatory transcription activity. Able to interact with Tbp and RNA polymerase in the absence of DNA promoter. Interacts both with the preinitiation and elongation complexes.

In terms of biological role, transcription factor that plays a role in the activation of archaeal genes transcribed by RNA polymerase. Facilitates transcription initiation by enhancing TATA-box recognition by TATA-box-binding protein (Tbp), and transcription factor B (Tfb) and RNA polymerase recruitment. Not absolutely required for transcription in vitro, but particularly important in cases where Tbp or Tfb function is not optimal. It dynamically alters the nucleic acid-binding properties of RNA polymerases by stabilizing the initiation complex and destabilizing elongation complexes. Seems to translocate with the RNA polymerase following initiation and acts by binding to the non template strand of the transcription bubble in elongation complexes. This Halobacterium salinarum (strain ATCC 700922 / JCM 11081 / NRC-1) (Halobacterium halobium) protein is Transcription factor E.